The chain runs to 164 residues: Lipoprotein signal peptidase (164 aa).

3 helical membrane-spanning segments follow: residues 12 to 32 (WLWL…LILQ), 70 to 90 (WFFA…MYRL), and 102 to 122 (ALII…GFVV). Catalysis depends on residues aspartate 123 and aspartate 141. The chain crosses the membrane as a helical span at residues 137–157 (FNLADTAICVGAALIVLEGFL).

It belongs to the peptidase A8 family.

Its subcellular location is the cell inner membrane. The catalysed reaction is Release of signal peptides from bacterial membrane prolipoproteins. Hydrolyzes -Xaa-Yaa-Zaa-|-(S,diacylglyceryl)Cys-, in which Xaa is hydrophobic (preferably Leu), and Yaa (Ala or Ser) and Zaa (Gly or Ala) have small, neutral side chains.. It participates in protein modification; lipoprotein biosynthesis (signal peptide cleavage). This protein specifically catalyzes the removal of signal peptides from prolipoproteins. The sequence is that of Lipoprotein signal peptidase from Shigella boydii serotype 4 (strain Sb227).